We begin with the raw amino-acid sequence, 97 residues long: Antitoxin YafN (97 aa).

This sequence belongs to the phD/YefM antitoxin family. In terms of assembly, probably forms a complex with the mRNA interferase YafO which inhibits the mRNA interferase activity.

Antitoxin component of a type II toxin-antitoxin (TA) system. Functions as an mRNA interferase antitoxin; overexpression prevents YafO-mediated cessation of cell growth and inhibition of cell proliferation. This Escherichia coli (strain K12) protein is Antitoxin YafN (yafN).